Consider the following 1184-residue polypeptide: MSGHSGHDVKYGRHRTRRSFARISEVLELPNLIEIQTASYQWFLDEGLREMFRDISPIEDFAGNLSLEFIDYDLGEPKYSVEESKNRDANYAAPLRVKLRLINKETGEVKDQEVFMGDFPLMTEMGTFIINGAERVIVSQLVRSPGVYFNGKLDKNGKKGFGSTVIPNRGAWLEYETDAKDVVHVRIDRTRKLPVTVLLRALGFGSDQEIIDLIGDNDYLRNTLEKDNTDNAEKALLEIYERLRPGEPPTVDNARSLLVSRFFDPKRYDLASVGRYKINKKLHLKNRLFNQTLAETLVDPETGEIIASKGDILDRRNLDQIIPNLENGVGFRTLRPTDGVMEDSVLVQSIKIYAPNDEEKEINIIGNAYIEENVKHITPSDIISSISYFFNLLHGVGDTDDIDHLGNRRLRSVGELLQNQFRIGLSRMERVVRERMSIQDMTTITPQQLINIRPVVASIKEFFGSSQLSQFMDQTNPLGELTHKRRLSALGPGGLTRERAGYEVRDVHYSHYGRMCPIETPEGPNIGLINSLSSFAKVNKFGFIETPYRRVDPETNRVTDKIDYLTADEEDNYVVAQANSKLDEQGTFTEEEVMARFRSENLAVEKERIDYMDVSPKQVVSVATACIPFLENDDSNRALMGANMQRQAVPLMHPEAPFVGTGMEHVSAKDSGAAVTAKHDGIVEHVEAREIWVRRVSLVDGKEVTGGIDKYTLRKFVRSNQGTCYNQRPNVAEGDRVVKGEILGNGPSMDSGELALGRNVLVAFMTWDGYNYEDAIIMSERLVKDDVYTSIHIEEFESEARDTKLGPEEMTRDIPNVGEDALRDLDERGIIRVGAEVKDNDLLVGKVTPKGVTELTAEERLLHAIFGEKAREVRDTSLRVPHGGGGIVLDVKIFTREAGDELPPGVNQLVRVYIVQKRKIHEGDKMAGRHGNKGVISRILPEEDMPFMPDGTPVDIMLNPLGVPSRMNIGQVLELHLGMAARALGIHVATPVFDGANEEDVWSTVEEAGMARDAKTILYDGRSGEAFDNRISVGVMYMIKLAHMVDDKLHARSTGPYSLVTQQPLGGKAQFGGQRFGEMEVWALEAYGAAYTLQEILTIKSDDVVGRVKTYEAIVKGESVPEPGVPESFKVLIKELQSLGMDVKMLSADEEEIEMRDMDDDDFTNQNDAFNIVQPENAAAEKTE.

The disordered stretch occupies residues 1160–1184; that stretch reads DDDFTNQNDAFNIVQPENAAAEKTE.

The protein belongs to the RNA polymerase beta chain family. The RNAP catalytic core consists of 2 alpha, 1 beta, 1 beta' and 1 omega subunit. When a sigma factor is associated with the core the holoenzyme is formed, which can initiate transcription.

The enzyme catalyses RNA(n) + a ribonucleoside 5'-triphosphate = RNA(n+1) + diphosphate. Functionally, DNA-dependent RNA polymerase catalyzes the transcription of DNA into RNA using the four ribonucleoside triphosphates as substrates. This chain is DNA-directed RNA polymerase subunit beta, found in Listeria monocytogenes serotype 4b (strain F2365).